The chain runs to 183 residues: Tetrahydromethanopterin S-methyltransferase subunit A 2 (183 aa).

At 1–101 the chain is on the cytoplasmic side; that stretch reads MFLMVEKKPV…TMKALHSNGV (101 aa). Residue histidine 87 coordinates 5-hydroxybenzimidazolylcob(I)amide. A helical membrane pass occupies residues 102–118; sequence DLETGRIIGATGAIPYI. Residues 119–183 lie on the Extracellular side of the membrane; it reads ENMPEEAIER…IGKGDSEENT (65 aa).

It belongs to the MtrA family. As to quaternary structure, the complex is composed of 8 subunits; MtrA, MtrB, MtrC, MtrD, MtrE, MtrF, MtrG and MtrH. 5-hydroxybenzimidazolylcob(I)amide is required as a cofactor.

Its subcellular location is the cell membrane. It carries out the reaction 5-methyl-5,6,7,8-tetrahydromethanopterin + coenzyme M + 2 Na(+)(in) = 5,6,7,8-tetrahydromethanopterin + methyl-coenzyme M + 2 Na(+)(out). Its pathway is one-carbon metabolism; methanogenesis from CO(2); methyl-coenzyme M from 5,10-methylene-5,6,7,8-tetrahydromethanopterin: step 2/2. Functionally, part of a complex that catalyzes the formation of methyl-coenzyme M and tetrahydromethanopterin from coenzyme M and methyl-tetrahydromethanopterin. This is an energy-conserving, sodium-ion translocating step. This chain is Tetrahydromethanopterin S-methyltransferase subunit A 2, found in Methanothermobacter thermautotrophicus (strain ATCC 29096 / DSM 1053 / JCM 10044 / NBRC 100330 / Delta H) (Methanobacterium thermoautotrophicum).